A 263-amino-acid polypeptide reads, in one-letter code: Lens fiber major intrinsic protein (263 aa).

The Cytoplasmic portion of the chain corresponds to 1–9 (MWELRSASF). The chain crosses the membrane as a helical span at residues 10–29 (WRAIFAEFFATLFYVFFGLG). The Extracellular portion of the chain corresponds to 30 to 41 (ASLRWAPGPLHV). A helical transmembrane segment spans residues 42–59 (LQVALAFGLALATLVQTV). The Cytoplasmic portion of the chain corresponds to 60–61 (GH). Positions 62-77 (ISGAHVNPAVTFAFLV) form an intramembrane region, discontinuously helical. Positions 68 to 70 (NPA) match the NPA 1 motif. Residues 78-82 (GSQMS) are Cytoplasmic-facing. Residues 83–106 (LLRAFCYIAAQLLGAVAGAAVLYS) traverse the membrane as a helical segment. Residues 107-127 (VTPPAVRGNLALNTLHAGVSV) are Extracellular-facing. A helical membrane pass occupies residues 128–148 (GQATTVEIFLTLQFVLCIFAT). Residues 149 to 156 (YDERRNGR) lie on the Cytoplasmic side of the membrane. A helical membrane pass occupies residues 157 to 175 (MGSVALAVGFSLTLGHLFG). Residues 176–178 (MYY) lie on the Extracellular side of the membrane. Residues 179 to 193 (TGAGMNPARSFAPAI) constitute an intramembrane region (discontinuously helical). Residues 184–186 (NPA) carry the NPA 2 motif. At 194 to 200 (LTRNFSN) the chain is on the extracellular side. A helical membrane pass occupies residues 201–222 (HWVYWVGPIIGGGLGSLLYDFL). Over 223-263 (LFPRLKSVSERLSILKGARPSDSNGQPEGTGEPVELKTQAL) the chain is Cytoplasmic. An interaction with CALM region spans residues 227 to 237 (LKSVSERLSIL). A phosphoserine mark is found at S235, S243, and S245. Residues 240–263 (ARPSDSNGQPEGTGEPVELKTQAL) form a disordered region. The residue at position 246 (N246) is a Deamidated asparagine.

It belongs to the MIP/aquaporin (TC 1.A.8) family. As to quaternary structure, homotetramer; each monomer provides an independent water pore. Two homotetramers on opposing membranes can dimerize, forming a cell-cell junction. Interacts with CALM; the calcium-calmodulin/CALM complex interacts with the cytoplasmic domains of two aquaporins, leading to channel closure. Interacts with BFSP1 (via C-terminus); prevents calcium-dependent inhibition of the water channel activity. Subject to partial proteolytic cleavage in the eye lens core. Partial proteolysis promotes interactions between tetramers from adjoining membranes. In terms of processing, fatty acylated at Met-1 and Lys-238. The acyl modifications, in decreasing order of ion abundance, are: oleoyl (C18:1) &gt; palmitoyl (C16:0) &gt; stearoyl (C18:0) &gt; eicosenoyl (C20:1) &gt; dihomo-gamma-linolenoyl (C20:3) &gt; palmitoleoyl (C16:1) &gt; eicosadienoyl (C20:2).

Its subcellular location is the cell membrane. The protein localises to the cell junction. It catalyses the reaction H2O(in) = H2O(out). With respect to regulation, the water channel activity is inhibited by calcium through calmodulin/CALM. Functionally, aquaporins form homotetrameric transmembrane channels, with each monomer independently mediating water transport across the plasma membrane along its osmotic gradient. Specifically expressed in lens fiber cells, this aquaporin is crucial for maintaining lens water homeostasis and transparency. Beyond water permeability, it also acts as a cell-to-cell adhesion molecule, forming thin junctions between lens fiber cells that are essential for maintaining the ordered structure and transparency of the lens. The protein is Lens fiber major intrinsic protein of Mus musculus (Mouse).